The following is a 247-amino-acid chain: Malonyl-[acyl-carrier protein] O-methyltransferase (247 aa).

This sequence belongs to the methyltransferase superfamily.

The enzyme catalyses malonyl-[ACP] + S-adenosyl-L-methionine = malonyl-[ACP] methyl ester + S-adenosyl-L-homocysteine. The protein operates within cofactor biosynthesis; biotin biosynthesis. Converts the free carboxyl group of a malonyl-thioester to its methyl ester by transfer of a methyl group from S-adenosyl-L-methionine (SAM). It allows to synthesize pimeloyl-ACP via the fatty acid synthetic pathway. The protein is Malonyl-[acyl-carrier protein] O-methyltransferase of Buchnera aphidicola subsp. Baizongia pistaciae (strain Bp).